The sequence spans 211 residues: Imidazole glycerol phosphate synthase subunit HisH (211 aa).

A Glutamine amidotransferase type-1 domain is found at 3 to 211; the sequence is VVAVIDYEMG…VSQVREKIAA (209 aa). The active-site Nucleophile is the cysteine 81. Active-site residues include histidine 186 and glutamate 188.

Heterodimer of HisH and HisF.

Its subcellular location is the cytoplasm. It carries out the reaction 5-[(5-phospho-1-deoxy-D-ribulos-1-ylimino)methylamino]-1-(5-phospho-beta-D-ribosyl)imidazole-4-carboxamide + L-glutamine = D-erythro-1-(imidazol-4-yl)glycerol 3-phosphate + 5-amino-1-(5-phospho-beta-D-ribosyl)imidazole-4-carboxamide + L-glutamate + H(+). It catalyses the reaction L-glutamine + H2O = L-glutamate + NH4(+). The protein operates within amino-acid biosynthesis; L-histidine biosynthesis; L-histidine from 5-phospho-alpha-D-ribose 1-diphosphate: step 5/9. IGPS catalyzes the conversion of PRFAR and glutamine to IGP, AICAR and glutamate. The HisH subunit catalyzes the hydrolysis of glutamine to glutamate and ammonia as part of the synthesis of IGP and AICAR. The resulting ammonia molecule is channeled to the active site of HisF. This Nostoc sp. (strain PCC 7120 / SAG 25.82 / UTEX 2576) protein is Imidazole glycerol phosphate synthase subunit HisH.